The sequence spans 138 residues: Endoribonuclease YbeY (138 aa).

Residues H105, H109, and D115 each contribute to the Zn(2+) site.

Belongs to the endoribonuclease YbeY family. The cofactor is Zn(2+).

It localises to the cytoplasm. In terms of biological role, single strand-specific metallo-endoribonuclease involved in late-stage 70S ribosome quality control and in maturation of the 3' terminus of the 16S rRNA. This chain is Endoribonuclease YbeY, found in Chlorobium phaeobacteroides (strain BS1).